A 565-amino-acid chain; its full sequence is Zinc finger protein 143 (565 aa).

7 C2H2-type zinc fingers span residues 230-254 (FRCD…ERSH), 260-284 (YQCD…VRTH), 290-314 (YRCS…VRTH), 320-344 (FKCP…IRTH), 350-374 (YYCS…VRIH), 380-404 (YVCT…HVVH), and 410-433 (YNCN…RTAH).

The protein belongs to the GLI C2H2-type zinc-finger protein family.

Its subcellular location is the nucleus. In terms of biological role, transcriptional activator. Activates the gene for selenocysteine tRNA (tRNAsec). Binds to the activator element (AE) motif of the selenocysteine tRNA gene promoter. In Xenopus laevis (African clawed frog), this protein is Zinc finger protein 143 (znf143).